We begin with the raw amino-acid sequence, 247 residues long: uncharacterized protein (247 aa).

The 75-residue stretch at 11-85 (GMSIGAVLDL…LKVIRAQLDA (75 aa)) folds into the HTH merR-type domain. A DNA-binding region (H-T-H motif) is located at residues 14–38 (IGAVLDLLRPDFPDVTISKIRFLEA).

Homodimer.

Transcriptional regulator that binds to its own promoter and thus may play a role in the regulation of the cotranscribed genes Rv1827 and Rv1828. Can also bind several promoter regions of genes that are essential, including ftsZ. Binds to the imperfect everted repeat sequence CTCAA through its winged-HTH motif. This is an uncharacterized protein from Mycobacterium tuberculosis (strain ATCC 25618 / H37Rv).